The chain runs to 109 residues: uncharacterized protein (109 aa).

Residues 78–98 (YTCIMYIGLLCMFVLLYMTVI) traverse the membrane as a helical segment.

It is found in the membrane. This is an uncharacterized protein from Saccharomyces cerevisiae (strain ATCC 204508 / S288c) (Baker's yeast).